The sequence spans 121 residues: Large ribosomal subunit protein uL22c (121 aa).

Belongs to the universal ribosomal protein uL22 family. In terms of assembly, part of the 50S ribosomal subunit.

It localises to the plastid. The protein localises to the chloroplast. This protein binds specifically to 23S rRNA. Its function is as follows. The globular domain of the protein is located near the polypeptide exit tunnel on the outside of the subunit, while an extended beta-hairpin is found that lines the wall of the exit tunnel in the center of the 70S ribosome. The protein is Large ribosomal subunit protein uL22c (rpl22) of Guillardia theta (Cryptophyte).